A 1207-amino-acid polypeptide reads, in one-letter code: Chromosomal serine/threonine-protein kinase JIL-1 (1207 aa).

Residues methionine 1–arginine 19 are compositionally biased toward polar residues. 3 disordered regions span residues methionine 1 to arginine 119, glutamine 164 to leucine 183, and serine 210 to aspartate 230. Residues serine 29 and serine 31 each carry the phosphoserine modification. The span at leucine 45–glycine 69 shows a compositional bias: polar residues. Over residues asparagine 88–asparagine 97 the composition is skewed to low complexity. The span at serine 98 to asparagine 108 shows a compositional bias: polar residues. A compositionally biased stretch (low complexity) spans serine 109–alanine 118. Positions glutamine 164–glutamate 178 are enriched in acidic residues. Residues threonine 213–proline 226 are compositionally biased toward polar residues. The Protein kinase 1 domain occupies phenylalanine 261 to phenylalanine 530. ATP-binding positions include leucine 267–valine 275 and lysine 293. Catalysis depends on aspartate 389, which acts as the Proton acceptor. Phosphoserine is present on serine 424. The 69-residue stretch at asparagine 531–arginine 599 folds into the AGC-kinase C-terminal domain. Threonine 588 is modified (phosphothreonine). The 264-residue stretch at leucine 623–leucine 886 folds into the Protein kinase 2 domain. Residues threonine 629–cysteine 637 and lysine 652 contribute to the ATP site. Catalysis depends on aspartate 739, which acts as the Proton acceptor. Threonine 1045 carries the post-translational modification Phosphothreonine. Serine 1047 is subject to Phosphoserine. The tract at residues threonine 1168–alanine 1197 is disordered.

The protein belongs to the protein kinase superfamily. Ser/Thr protein kinase family. Interacts with lola. Interacts with proteins of the male specific lethal (MSL) dosage compensation complex; this interaction is mediated by the kinase domains. Requires Mg(2+) as cofactor. Autophosphorylated in vitro.

The protein localises to the nucleus. It is found in the chromosome. It carries out the reaction L-seryl-[protein] + ATP = O-phospho-L-seryl-[protein] + ADP + H(+). It catalyses the reaction L-threonyl-[protein] + ATP = O-phospho-L-threonyl-[protein] + ADP + H(+). Its function is as follows. Phosphorylates 'Ser-10' of histone H3. May regulate gene expression by establishing or maintaining the structure of more open chromatin regions. Also required for normal polytene chromosome structure, for oogenesis and for viability throughout development. Regulates the structure of polytene chromosomes in salivary glands. May phosphorylate 'Ser-1' of histone H2A. This is Chromosomal serine/threonine-protein kinase JIL-1 from Drosophila melanogaster (Fruit fly).